The sequence spans 197 residues: Prefoldin subunit 3 (197 aa).

A2 carries the N-acetylalanine modification. K59 carries the N6-acetyllysine modification.

Belongs to the prefoldin subunit alpha family. As to quaternary structure, heterohexamer of two PFD-alpha type and four PFD-beta type subunits. Binds to the C-terminal part of VHL.

Its subcellular location is the cytoplasm. It is found in the nucleus. Its function is as follows. Binds specifically to cytosolic chaperonin (c-CPN) and transfers target proteins to it. Binds to nascent polypeptide chain and promotes folding in an environment in which there are many competing pathways for nonnative proteins. The sequence is that of Prefoldin subunit 3 (VBP1) from Bos taurus (Bovine).